We begin with the raw amino-acid sequence, 673 residues long: Annexin A6 (673 aa).

At alanine 2 the chain carries N-acetylalanine. At serine 13 the chain carries Phosphoserine. 8 Annexin repeats span residues 20–91 (FDPN…GLMR), 92–163 (PPAY…VLLQ), 175–247 (DLVQ…AVVK), 251–322 (STPE…KLSG), 363–434 (FNPD…GLMM), 435–506 (PPAH…SLAT), 521–595 (EDAQ…AIVQ), and 599–670 (NKPL…ALCG). A Phosphotyrosine modification is found at tyrosine 30. Residues lysine 63, lysine 68, lysine 75, and lysine 81 each carry the N6-acetyllysine modification. Tyrosine 201 is modified (phosphotyrosine). Lysine 306, lysine 370, and lysine 418 each carry N6-acetyllysine. At serine 422 the chain carries Phosphoserine. Lysine 483 bears the N6-acetyllysine mark. Serine 537 carries the post-translational modification Phosphoserine. Lysine 620 carries the N6-acetyllysine modification.

This sequence belongs to the annexin family. Post-translationally, phosphorylated in response to growth factor stimulation.

It localises to the cytoplasm. The protein resides in the melanosome. Its function is as follows. May associate with CD21. May regulate the release of Ca(2+) from intracellular stores. This chain is Annexin A6 (ANXA6), found in Homo sapiens (Human).